We begin with the raw amino-acid sequence, 418 residues long: Light-independent protochlorophyllide reductase subunit N (418 aa).

3 residues coordinate [4Fe-4S] cluster: Cys-17, Cys-42, and Cys-103.

The protein belongs to the BchN/ChlN family. As to quaternary structure, protochlorophyllide reductase is composed of three subunits; ChlL, ChlN and ChlB. Forms a heterotetramer of two ChlB and two ChlN subunits. The cofactor is [4Fe-4S] cluster.

It carries out the reaction chlorophyllide a + oxidized 2[4Fe-4S]-[ferredoxin] + 2 ADP + 2 phosphate = protochlorophyllide a + reduced 2[4Fe-4S]-[ferredoxin] + 2 ATP + 2 H2O. Its pathway is porphyrin-containing compound metabolism; chlorophyll biosynthesis (light-independent). Component of the dark-operative protochlorophyllide reductase (DPOR) that uses Mg-ATP and reduced ferredoxin to reduce ring D of protochlorophyllide (Pchlide) to form chlorophyllide a (Chlide). This reaction is light-independent. The NB-protein (ChlN-ChlB) is the catalytic component of the complex. The polypeptide is Light-independent protochlorophyllide reductase subunit N (Prochlorococcus marinus (strain NATL2A)).